We begin with the raw amino-acid sequence, 80 residues long: MFDAMTDAVTQDMSKILQTKAADLSGERLRNVEAALDATAQQIRGHWSAASDQAARSDFSVLHDGITAARNIVVHIASMR.

Its function is as follows. Involved in the regulation of several genes of the hrp-hrc-hpa cluster, which encodes a type III secretion system (T3SS). Upregulates the expression of hpa2, hpa1 and hpaB and partially controls the expression of hrcC and hrcT. Controls the secretion of the T3SS TAL effector AvrXa27. Also regulates the expression of several HrpX-regulated protein (Xrp) genes. Has no influence on hrpG or hrpX expression. In Xanthomonas oryzae pv. oryzicola, this protein is Regulatory protein HrpD6.